The primary structure comprises 510 residues: 2,3-bisphosphoglycerate-independent phosphoglycerate mutase (510 aa).

2 residues coordinate Mn(2+): Asp-12 and Ser-62. The active-site Phosphoserine intermediate is the Ser-62. Residues His-123, Arg-153 to Asp-154, Arg-185, Arg-191, Arg-260 to Arg-263, and Lys-335 contribute to the substrate site. Positions 402, 406, 443, 444, and 461 each coordinate Mn(2+).

Belongs to the BPG-independent phosphoglycerate mutase family. As to quaternary structure, monomer. Mn(2+) serves as cofactor.

The catalysed reaction is (2R)-2-phosphoglycerate = (2R)-3-phosphoglycerate. The protein operates within carbohydrate degradation; glycolysis; pyruvate from D-glyceraldehyde 3-phosphate: step 3/5. Functionally, catalyzes the interconversion of 2-phosphoglycerate and 3-phosphoglycerate. The protein is 2,3-bisphosphoglycerate-independent phosphoglycerate mutase of Listeria welshimeri serovar 6b (strain ATCC 35897 / DSM 20650 / CCUG 15529 / CIP 8149 / NCTC 11857 / SLCC 5334 / V8).